The following is a 51-amino-acid chain: DNA-directed RNA polymerases II, IV and V subunit 12 (51 aa).

Zn(2+) contacts are provided by Cys12, Cys15, Cys29, and Cys32.

The protein belongs to the archaeal Rpo12/eukaryotic RPC10 RNA polymerase subunit family. As to quaternary structure, component of the RNA polymerase II, IV and V complexes. Associates with the mediator complex. Interacts with NRPD1.

The protein localises to the nucleus. In terms of biological role, DNA-dependent RNA polymerase catalyzes the transcription of DNA into RNA using the four ribonucleoside triphosphates as substrates. Component of RNA polymerase II which synthesizes mRNA precursors and many functional non-coding RNAs. Pol II is the central component of the basal RNA polymerase II transcription machinery. It is composed of mobile elements that move relative to each other. Component of RNA polymerases IV and V which mediate short-interfering RNAs (siRNA) accumulation and subsequent RNA-directed DNA methylation-dependent (RdDM) transcriptional gene silencing (TGS) of endogenous repeated sequences, including transposable elements. This Arabidopsis thaliana (Mouse-ear cress) protein is DNA-directed RNA polymerases II, IV and V subunit 12 (NRPB12).